The following is an 88-amino-acid chain: Small ribosomal subunit protein bS20 (88 aa).

Residues 1-25 (MANSPQAKKRARQNERRAEVNKARR) form a disordered region. Over residues 12–22 (RQNERRAEVNK) the composition is skewed to basic and acidic residues.

The protein belongs to the bacterial ribosomal protein bS20 family.

Binds directly to 16S ribosomal RNA. This Dinoroseobacter shibae (strain DSM 16493 / NCIMB 14021 / DFL 12) protein is Small ribosomal subunit protein bS20.